We begin with the raw amino-acid sequence, 559 residues long: 2-isopropylmalate synthase (559 aa).

In terms of domain architecture, Pyruvate carboxyltransferase spans 33 to 307 (PIWCSSDLRD…NPDLDFSDID (275 aa)). Residues aspartate 42, histidine 246, histidine 248, and asparagine 282 each contribute to the Mg(2+) site. The tract at residues 439–559 (ANTPYALVSH…SLSQPEAKAA (121 aa)) is regulatory domain.

Belongs to the alpha-IPM synthase/homocitrate synthase family. LeuA type 2 subfamily. In terms of assembly, homodimer. The cofactor is Mg(2+).

Its subcellular location is the cytoplasm. The enzyme catalyses 3-methyl-2-oxobutanoate + acetyl-CoA + H2O = (2S)-2-isopropylmalate + CoA + H(+). Its pathway is amino-acid biosynthesis; L-leucine biosynthesis; L-leucine from 3-methyl-2-oxobutanoate: step 1/4. In terms of biological role, catalyzes the condensation of the acetyl group of acetyl-CoA with 3-methyl-2-oxobutanoate (2-ketoisovalerate) to form 3-carboxy-3-hydroxy-4-methylpentanoate (2-isopropylmalate). The polypeptide is 2-isopropylmalate synthase (Pseudomonas fluorescens (strain Pf0-1)).